Consider the following 67-residue polypeptide: MARWNVCSYCGKEFEPGTGKMYVRNDGRVYFFCSRKCEKYFFMGRNPRKLKWTKAFEEAKLQRAKRK.

Residues Cys7, Cys10, Cys33, and Cys37 each contribute to the Zn(2+) site. A C4-type zinc finger spans residues 7–37 (CSYCGKEFEPGTGKMYVRNDGRVYFFCSRKC).

Belongs to the eukaryotic ribosomal protein eL24 family. As to quaternary structure, part of the 50S ribosomal subunit. Forms a cluster with proteins L3 and L14. Zn(2+) is required as a cofactor.

In terms of biological role, binds to the 23S rRNA. The sequence is that of Large ribosomal subunit protein eL24 from Thermococcus sibiricus (strain DSM 12597 / MM 739).